A 669-amino-acid chain; its full sequence is MWTLVGRGWGCARALAPRATGAALLVAPGPRSAPTLGAAPESWATDRLYSSAEFKEKLDMSRFPVENIRNFSIVAHVDHGKSTLADRLLELTGTIDKTKNNKQVLDKLQVERERGITVKAQTASLFYNCEGKQYLLNLIDTPGHVDFSYEVSRSLSACQGVLLVVDANEGIQAQTVANFFLAFEAQLSVIPVINKIDLKNADPERVENQIEKVFDIPSDECIKISAKLGTNVESVLQAIIERIPPPKVHRKNPLRALVFDSTFDQYRGVIANVALFDGVVSKGDKIVSAHTQKTYEVNEVGVLNPNEQPTHKLYAGQVGYLIAGMKDVTEAQIGDTLCLHKQPVEPLPGFKSAKPMVFAGMYPLDQSEYNNLKSAIEKLTLNDSSVTVHRDSSLALGAGWRLGFLGLLHMEVFNQRLEQEYNASVILTTPTVPYKAVLSSSKLIKEHREKEITIINPAQFPDKSKVTEYLEPVVLGTIITPDEYTGKIMMLCEARRAVQKNMIFIDQNRVMLKYLFPLNEIVVDFYDSLKSLSSGYASFDYEDAGYQTAELVKMDILLNGNTVEELVTVVHKDKAHSIGKAICERLKDSLPRQLFEIAIQAAIGSKIIARETVKAYRKNVLAKCYGGDITRKMKLLKRQAEGKKKLRKIGNVEVPKDAFIKVLKTQSSK.

A mitochondrion-targeting transit peptide spans 1–49 (MWTLVGRGWGCARALAPRATGAALLVAPGPRSAPTLGAAPESWATDRLY). One can recognise a tr-type G domain in the interval 66–247 (ENIRNFSIVA…AIIERIPPPK (182 aa)). Residues 75–82 (AHVDHGKS), 140–144 (DTPGH), and 194–197 (NKID) each bind GTP.

The protein belongs to the TRAFAC class translation factor GTPase superfamily. Classic translation factor GTPase family. LepA subfamily.

It is found in the mitochondrion inner membrane. It carries out the reaction GTP + H2O = GDP + phosphate + H(+). Its function is as follows. Promotes mitochondrial protein synthesis. May act as a fidelity factor of the translation reaction, by catalyzing a one-codon backward translocation of tRNAs on improperly translocated ribosomes. Binds to mitochondrial ribosomes in a GTP-dependent manner. The protein is Translation factor GUF1, mitochondrial of Homo sapiens (Human).